The sequence spans 538 residues: MSKFQNYYNNDDNVINYPYIDYIIKSYIPEYYVDTNRRKYVDMHIFEEAMLHVSTIYEESDKTYERLEYLGDAIFHMIITEYFYHRYNEENEGFLTRLRIRIERGDSMVELSKNLGLNNFVQIYGISLNDHILEDIFESFIGAFYLNFGMKYTRLFIIKLIEKHKNLSELIAYDDNYKDLLLRYFHQMKWGHPKYIEEIVIDPKNNQRNKFISKVKNPFDKVIGIGSASTKKKSEQLASQMALTNLGVIIDGEIDTDWINKIEKIETEATQTEIKDKKPMSVFNPNNKLLSKNTIKNLLLQYNTKLPTIDIDLKLFYEAMTHRSYLIRKNLPNRDVPKSKSIVRLQKKSNERLQFLGDAVIHFIIGEYLFNKYADSGEGYLTRLRCKLENSESLFFLAKQSDISSYLLISQNIEVLHGRENVNIIGGGLEAFVGALYLNIGLGTVKQFLLEIMRIELDINQIAENETNYKDLILQLYNKNKWGHPVYKILKEEGPDHCKIFTMGLYLGNKLMGIGKASSKKKAEQIASKKMYQNYINN.

RNase III domains are found at residues 24–149 and 238–381; these read IKSY…LNFG and ASQM…EGYL. One can recognise a DRBM domain in the interval 408 to 477; the sequence is LISQNIEVLH…NYKDLILQLY (70 aa).

Belongs to the ribonuclease III family.

The enzyme catalyses Endonucleolytic cleavage to 5'-phosphomonoester.. Digests double-stranded RNA. The polypeptide is Probable ribonuclease 3 (Acanthamoeba polyphaga (Amoeba)).